A 431-amino-acid chain; its full sequence is MNFTKSEQLYQEALEHIVGGVNSPSRSYKAVGGGAPVVMERAQGAYFWDVDGNKYIDYLAAYGPIITGHAHPHITKAIQHAAENGVLYGTPTPYEITFAKMLKEAIPSLEKVRFVNSGTEAVMTTIRVARAYTGRDKIVKFAGCYHGHSDLVLVAAGSGPSTLGTPDSAGVPKSIAQEVITVPFNDVDAFKQAMDRWGNEVAAVLVEPIVGNFGIVEPKPGFLQAINDIAHAVGALVIYDEVITAFRFMYGGAQNLLGIEPDLTALGKIIGGGLPIGAYGGRKDIMEQVAPLGPAYQAGTMAGNPASILAGIACLEVLQQEGVYEHLDHLGAMLEAGILTHAKTYDIPITINRLKGALTVYFTTEKVENYEQAERTDGEMFAKFFKLMLHQGINLAPSKYEAWFITLAHTEEDIEYTIEAVERAFKSLKNE.

Residue lysine 268 is modified to N6-(pyridoxal phosphate)lysine.

The protein belongs to the class-III pyridoxal-phosphate-dependent aminotransferase family. HemL subfamily. Homodimer. Pyridoxal 5'-phosphate is required as a cofactor.

Its subcellular location is the cytoplasm. It catalyses the reaction (S)-4-amino-5-oxopentanoate = 5-aminolevulinate. It functions in the pathway porphyrin-containing compound metabolism; protoporphyrin-IX biosynthesis; 5-aminolevulinate from L-glutamyl-tRNA(Glu): step 2/2. The polypeptide is Glutamate-1-semialdehyde 2,1-aminomutase 1 (Anoxybacillus flavithermus (strain DSM 21510 / WK1)).